The primary structure comprises 617 residues: Hemagglutinin glycoprotein (617 aa).

The Intravirion portion of the chain corresponds to 1–37; the sequence is MSPQRDRINAFYKDNPHPKGSRIVINREHLMIDRPYV. The tract at residues 1-154 is stalk; the sequence is MSPQRDRINA…RIKLDYDQYC (154 aa). A helical membrane pass occupies residues 38-58; it reads LLAVLFVMFLSLIGLLAIAGI. Over 59 to 617 the chain is Virion surface; it reads RLHRAAIYTA…VTREDGTNRR (559 aa). Residue asparagine 168 is glycosylated (N-linked (GlcNAc...) asparagine; by host). The interval 171–175 is involved in cell-to-cell fusion dependent on CADM1, CADM2, and NECTIN4; it reads LLEAR. 4 N-linked (GlcNAc...) asparagine; by host glycosylation sites follow: asparagine 187, asparagine 200, asparagine 215, and asparagine 238. 5 cysteine pairs are disulfide-bonded: cysteine 188–cysteine 606, cysteine 287–cysteine 300, cysteine 381–cysteine 494, cysteine 386–cysteine 394, and cysteine 570–cysteine 579. An N-linked (GlcNAc...) asparagine; by host glycan is attached at asparagine 416. Positions 458 to 543 are interaction with host NECTIN4 receptor; it reads PMKNLALGVI…VEHAVVYYVY (86 aa).

This sequence belongs to the paramyxoviruses hemagglutinin-neuraminidase family. Non-sialidase subfamily. As to quaternary structure, homodimer; disulfide-linked. Further forms homotetramer (dimer of dimers). Interacts (via C-terminus) with human NECTIN4 (via N-terminus); this interaction allows attachment to the respiratory epithelium and viral entry. Interacts (via C-terminus) with human SLAMF1/CD150 (via N-terminus); this interaction allows attachment and viral entry into the CD150-expressing immune cells.

The protein resides in the virion membrane. Its subcellular location is the host cell membrane. Functionally, attaches the virus to the human SLAMF1/CD150 receptor for entry into host dendritic cells, macrophages, activated memory T cells and naive or memory B cells, thereby explaining the long immunosuppression that follows infection. In the respiratory airways, binds to the NECTIN4 receptor for entry into the host cell. During viral entry or virus-mediated fusion between infected cells and neighboring susceptible cells, the head domain of the H protein initially binds to its receptor and then the stalk region of the H protein transmits the fusion-triggering signal to the F protein. Unilateral receptor binding to only one of the covalently linked dimer pairs in the H tetramer is sufficient for F triggering. In case of neuropathogenic strains, host CADM1 (isoform 5) and CADM2 (isoform 5) can interact with measles hemagglutinin to trigger hyperfusogenic F-mediated membrane fusion and presumably transsynaptic cell-to-cell transmission of the virus. This chain is Hemagglutinin glycoprotein (H), found in Homo sapiens (Human).